Consider the following 156-residue polypeptide: Arginine repressor (156 aa).

The protein belongs to the ArgR family.

Its subcellular location is the cytoplasm. It participates in amino-acid biosynthesis; L-arginine biosynthesis [regulation]. Its function is as follows. Regulates arginine biosynthesis genes. The polypeptide is Arginine repressor (Escherichia coli O81 (strain ED1a)).